The following is a 37-amino-acid chain: Cytochrome b6-f complex subunit 5 (37 aa).

The helical transmembrane segment at 5–25 (FLFGIVLGLIPITLAGLFVTA) threads the bilayer.

The protein belongs to the PetG family. As to quaternary structure, the 4 large subunits of the cytochrome b6-f complex are cytochrome b6, subunit IV (17 kDa polypeptide, PetD), cytochrome f and the Rieske protein, while the 4 small subunits are PetG, PetL, PetM and PetN. The complex functions as a dimer.

It is found in the plastid. Its subcellular location is the chloroplast thylakoid membrane. Component of the cytochrome b6-f complex, which mediates electron transfer between photosystem II (PSII) and photosystem I (PSI), cyclic electron flow around PSI, and state transitions. PetG is required for either the stability or assembly of the cytochrome b6-f complex. The chain is Cytochrome b6-f complex subunit 5 from Platanus occidentalis (Sycamore).